The primary structure comprises 80 residues: Exodeoxyribonuclease 7 small subunit (80 aa).

The protein belongs to the XseB family. In terms of assembly, heterooligomer composed of large and small subunits.

It localises to the cytoplasm. The catalysed reaction is Exonucleolytic cleavage in either 5'- to 3'- or 3'- to 5'-direction to yield nucleoside 5'-phosphates.. Functionally, bidirectionally degrades single-stranded DNA into large acid-insoluble oligonucleotides, which are then degraded further into small acid-soluble oligonucleotides. The polypeptide is Exodeoxyribonuclease 7 small subunit (Klebsiella pneumoniae (strain 342)).